The chain runs to 656 residues: Protein teflon (656 aa).

Residues 33 to 56 (LYCHFCRDLFTQLPEFLRHLQSNH) form a C2H2-type 1 zinc finger. A disordered region spans residues 80–131 (DKAHEDAQSAGHNSSSGDSRSLMNSEDSRAIDGSEENSDNSPVKPEQIGKQN). Residues 89-104 (AGHNSSSGDSRSLMNS) are compositionally biased toward polar residues. 2 C2H2-type zinc fingers span residues 606–628 (YFCK…LISH) and 632–655 (FQCT…RNAH).

This sequence belongs to the Teflon family.

Its subcellular location is the nucleus. The protein resides in the chromosome. Specifically required in males for proper segregation of autosomal bivalents at meiosis I. Expression is required in the male germ line prior to spermatocyte stage S4. May have a role as a bridging molecule maintaining adhesion to hold autosome bivalents together via heterochromatic connections. This Drosophila sechellia (Fruit fly) protein is Protein teflon.